The sequence spans 201 residues: ATP-dependent Clp protease proteolytic subunit (201 aa).

Ser-98 functions as the Nucleophile in the catalytic mechanism. His-123 is an active-site residue.

This sequence belongs to the peptidase S14 family. Fourteen ClpP subunits assemble into 2 heptameric rings which stack back to back to give a disk-like structure with a central cavity, resembling the structure of eukaryotic proteasomes.

The protein localises to the cytoplasm. It catalyses the reaction Hydrolysis of proteins to small peptides in the presence of ATP and magnesium. alpha-casein is the usual test substrate. In the absence of ATP, only oligopeptides shorter than five residues are hydrolyzed (such as succinyl-Leu-Tyr-|-NHMec, and Leu-Tyr-Leu-|-Tyr-Trp, in which cleavage of the -Tyr-|-Leu- and -Tyr-|-Trp bonds also occurs).. Cleaves peptides in various proteins in a process that requires ATP hydrolysis. Has a chymotrypsin-like activity. Plays a major role in the degradation of misfolded proteins. In Rickettsia felis (strain ATCC VR-1525 / URRWXCal2) (Rickettsia azadi), this protein is ATP-dependent Clp protease proteolytic subunit.